Consider the following 274-residue polypeptide: Large ribosomal subunit protein uL2 (274 aa).

The disordered stretch occupies residues 224–274 (VMNPVDHPHGGGEGRSPIGRNPVTPWGKPALGARTRKKKPGDRLIVKRRAR). The span at 257–274 (RTRKKKPGDRLIVKRRAR) shows a compositional bias: basic residues.

This sequence belongs to the universal ribosomal protein uL2 family. In terms of assembly, part of the 50S ribosomal subunit. Forms a bridge to the 30S subunit in the 70S ribosome.

Its function is as follows. One of the primary rRNA binding proteins. Required for association of the 30S and 50S subunits to form the 70S ribosome, for tRNA binding and peptide bond formation. It has been suggested to have peptidyltransferase activity; this is somewhat controversial. Makes several contacts with the 16S rRNA in the 70S ribosome. The protein is Large ribosomal subunit protein uL2 of Pelotomaculum thermopropionicum (strain DSM 13744 / JCM 10971 / SI).